The chain runs to 483 residues: 2-methylcitrate dehydratase (483 aa).

Belongs to the PrpD family. Monomer.

It catalyses the reaction (2S,3S)-2-methylcitrate = 2-methyl-cis-aconitate + H2O. The catalysed reaction is citrate = D-threo-isocitrate. It functions in the pathway organic acid metabolism; propanoate degradation. It participates in carbohydrate metabolism; tricarboxylic acid cycle; isocitrate from oxaloacetate: step 2/2. Functionally, involved in the catabolism of short chain fatty acids (SCFA) via the tricarboxylic acid (TCA)(acetyl degradation route) and via the 2-methylcitrate cycle I (propionate degradation route). Catalyzes the dehydration of 2-methylcitrate (2-MC) to yield the cis isomer of 2-methyl-aconitate. It is also able to catalyze the dehydration of citrate and the hydration of cis-aconitate at a lower rate. Due to its broad substrate specificity, it seems to be responsible for the residual aconitase activity of the acnAB-null mutant. The protein is 2-methylcitrate dehydratase of Escherichia coli (strain K12).